The chain runs to 435 residues: Zinc metalloproteinase/disintegrin (435 aa).

The propeptide occupies Lys-1–Glu-26. Position 27 is a pyrrolidone carboxylic acid (Gln-27). A Peptidase M12B domain is found at Arg-33–Pro-227. N-linked (GlcNAc...) asparagine glycosylation is present at Asn-115. 3 disulfides stabilise this stretch: Cys-144-Cys-222, Cys-184-Cys-206, and Cys-186-Cys-189. His-169 serves as a coordination point for Zn(2+). Residue Glu-170 is part of the active site. Positions 173 and 179 each coordinate Zn(2+). The propeptide occupies Leu-228–Leu-243. The 84-residue stretch at Thr-235–Asn-318 folds into the Disintegrin domain. Residues Val-237, Asn-240, Leu-242, Glu-244, Glu-247, and Asp-250 each coordinate Ca(2+). 6 disulfides stabilise this stretch: Cys-249-Cys-264, Cys-251-Cys-259, Cys-258-Cys-281, Cys-272-Cys-278, Cys-277-Cys-303, and Cys-290-Cys-310. A D/ECD-tripeptide motif is present at residues Glu-296 to Asp-298.

Belongs to the venom metalloproteinase (M12B) family. P-III subfamily. P-IIIb sub-subfamily. In terms of assembly, monomer. It depends on Zn(2+) as a cofactor. Post-translationally, the N-terminus of the metalloproteinase is blocked. As to expression, expressed by the venom gland.

It is found in the secreted. Inhibited by EDTA. Functionally, cleaves the alpha chain of fibrinogen (FGA) preferentially and cleaves the beta chain (FGB) either on longer incubation or at high concentrations. Induces apoptosis of endothelial cells (prior to cell detachment). In terms of biological role, disintegrin: inhibits platelet aggregation induced by ADP, thrombin, platelet-activating factor and collagen. Acts by inhibiting fibrinogen interaction with platelet receptors GPIIb/GPIIIa (ITGA2B/ITGB3). This is Zinc metalloproteinase/disintegrin from Craspedocephalus gramineus (Bamboo pit viper).